The primary structure comprises 105 residues: Large ribosomal subunit protein eL36 (105 aa).

This sequence belongs to the eukaryotic ribosomal protein eL36 family. As to quaternary structure, component of the large ribosomal subunit.

Its subcellular location is the cytoplasm. It localises to the cytosol. Functionally, component of the large ribosomal subunit. The ribosome is a large ribonucleoprotein complex responsible for the synthesis of proteins in the cell. This is Large ribosomal subunit protein eL36 (rpl36) from Danio rerio (Zebrafish).